Consider the following 226-residue polypeptide: ATP-dependent dethiobiotin synthetase BioD (226 aa).

12–17 (GVGKTV) lines the ATP pocket. A Mg(2+)-binding site is contributed by T16. K37 is a catalytic residue. T41 contacts substrate. Residues D49, 108 to 111 (EGAG), and 197 to 199 (PAG) contribute to the ATP site. Mg(2+) contacts are provided by D49 and E108.

It belongs to the dethiobiotin synthetase family. In terms of assembly, homodimer. Mg(2+) is required as a cofactor.

The protein resides in the cytoplasm. The enzyme catalyses (7R,8S)-7,8-diammoniononanoate + CO2 + ATP = (4R,5S)-dethiobiotin + ADP + phosphate + 3 H(+). Its pathway is cofactor biosynthesis; biotin biosynthesis; biotin from 7,8-diaminononanoate: step 1/2. Catalyzes a mechanistically unusual reaction, the ATP-dependent insertion of CO2 between the N7 and N8 nitrogen atoms of 7,8-diaminopelargonic acid (DAPA, also called 7,8-diammoniononanoate) to form a ureido ring. The chain is ATP-dependent dethiobiotin synthetase BioD from Mycobacterium avium (strain 104).